A 386-amino-acid chain; its full sequence is Succinate--CoA ligase [ADP-forming] subunit beta (386 aa).

The ATP-grasp domain occupies 9 to 244; the sequence is KELLKQFGVT…LDEEDPAEIE (236 aa). ATP-binding positions include lysine 46, 53-55, glutamate 99, alanine 102, and glutamate 107; that span reads GRG. 2 residues coordinate Mg(2+): asparagine 199 and aspartate 213. Substrate-binding positions include asparagine 264 and 321-323; that span reads GIM.

The protein belongs to the succinate/malate CoA ligase beta subunit family. As to quaternary structure, heterotetramer of two alpha and two beta subunits. Mg(2+) serves as cofactor.

It catalyses the reaction succinate + ATP + CoA = succinyl-CoA + ADP + phosphate. The catalysed reaction is GTP + succinate + CoA = succinyl-CoA + GDP + phosphate. Its pathway is carbohydrate metabolism; tricarboxylic acid cycle; succinate from succinyl-CoA (ligase route): step 1/1. Its function is as follows. Succinyl-CoA synthetase functions in the citric acid cycle (TCA), coupling the hydrolysis of succinyl-CoA to the synthesis of either ATP or GTP and thus represents the only step of substrate-level phosphorylation in the TCA. The beta subunit provides nucleotide specificity of the enzyme and binds the substrate succinate, while the binding sites for coenzyme A and phosphate are found in the alpha subunit. In Bordetella pertussis (strain Tohama I / ATCC BAA-589 / NCTC 13251), this protein is Succinate--CoA ligase [ADP-forming] subunit beta.